The sequence spans 351 residues: Dysbindin (351 aa).

Ser11 is modified (phosphoserine). Positions 88 to 181 form a coiled coil; that stretch reads EKKKTSLVEL…ELDAEHAQKV (94 aa). The tract at residues 173–331 is dysbindin; that stretch reads LDAEHAQKVL…DEEEVQVDTA (159 aa). The short motif at 243–256 is the Nuclear export signal element; it reads LMDISDQEALDVFL. The disordered stretch occupies residues 286–351; the sequence is PNPSELRAKP…TPDGGEDSDS (66 aa). The span at 296 to 305 shows a compositional bias: polar residues; sequence PSSSSTCTDS. Ser316, Ser321, and Ser349 each carry phosphoserine.

The protein belongs to the dysbindin family. As to quaternary structure, interacts (via its coiled coil domain) with KXD1. Interacts with CMYA5, PI4K2 and RNF151. Component of the biogenesis of lysosome-related organelles complex 1 (BLOC-1) composed of at least BLOC1S1, BLOC1S2, BLOC1S3, BLOC1S4, BLOC1S5, BLOC1S6, DTNBP1/BLOC1S7 and SNAPIN/BLOC1S8. Interacts directly in the complex with BLOC1S5, BLOC1S6 and SNAPIN/BLOC1S8. The BLOC-1 complex associates with the AP-3 protein complex and membrane protein cargos. This BLOC-1 complex also associates with the BLOC-2 complex in endosomes. Binds to DTNA and DTNB but may not be a physiological binding partner. Interacts (isoform 1 and isoform 2 only) with the DNA-dependent protein kinase complex DNA-PK; the interaction phosphorylates DTNBP1 in vitro. Interacts directly in this complex with XRCC5 and XRCC6. Interacts with AP3M1, AP3B2 and TRIM32. Interacts with XPO1; the interaction exports DTNBP1 out of the nucleus. In terms of processing, ubiquitinated by TRIM32. Ubiquitination leads to DTNBP1 degradation. Isoforms 1 and 2 highly phosphorylated by PRKDC in vitro. Isoform 3 only weakly phosphorylated by PRKDC in vitro. In terms of tissue distribution, detected in brain, in neurons and in neuropil. Isoform 1 is expressed in the cerebral cortex, and hippocampal frontal (HF). Specific expression in the posterior half of the superior temporal gyrus (pSTG). Higher expression of isoform 2 and 3 in the HF than in the pSTG while isoform 1 shows no difference in expression in these areas. In the HF, detected in dentate gyrus (DG) and in pyramidal cells of hippocampus CA2 and CA3 (at protein level). Expressed in all principal neuronal populations of the HF, namely pyramidal neurons in the subiculum and CA1-3, granule cells in the dense cell layer of the DG (DGg), and polymorph cells in the hilus of the DG (DGh). Maximal levels in CA2, CA3, and DGh. Isoform 2 not expressed in the cerebral cortex.

Its subcellular location is the cytoplasm. It is found in the cytoplasmic vesicle membrane. The protein resides in the endosome membrane. It localises to the melanosome membrane. The protein localises to the postsynaptic density. Its subcellular location is the endoplasmic reticulum. It is found in the nucleus. The protein resides in the cytoplasmic vesicle. It localises to the secretory vesicle. The protein localises to the synaptic vesicle membrane. Its subcellular location is the postsynaptic cell membrane. In terms of biological role, component of the BLOC-1 complex, a complex that is required for normal biogenesis of lysosome-related organelles (LRO), such as platelet dense granules and melanosomes. In concert with the AP-3 complex, the BLOC-1 complex is required to target membrane protein cargos into vesicles assembled at cell bodies for delivery into neurites and nerve terminals. The BLOC-1 complex, in association with SNARE proteins, is also proposed to be involved in neurite extension. Associates with the BLOC-2 complex to facilitate the transport of TYRP1 independent of AP-3 function. Plays a role in synaptic vesicle trafficking and in neurotransmitter release. Plays a role in the regulation of cell surface exposure of DRD2. May play a role in actin cytoskeleton reorganization and neurite outgrowth. May modulate MAPK8 phosphorylation. Appears to promote neuronal transmission and viability through regulating the expression of SNAP25 and SYN1, modulating PI3-kinase-Akt signaling and influencing glutamatergic release. Regulates the expression of SYN1 through binding to its promoter. Modulates prefrontal cortical activity via the dopamine/D2 pathway. The sequence is that of Dysbindin (DTNBP1) from Homo sapiens (Human).